The primary structure comprises 140 residues: Nucleoside diphosphate kinase (140 aa).

Positions 10, 58, 86, 92, 103, and 113 each coordinate ATP. His116 acts as the Pros-phosphohistidine intermediate in catalysis.

Belongs to the NDK family. In terms of assembly, homohexamer. The cofactor is Mg(2+).

Its subcellular location is the cytoplasm. The enzyme catalyses a 2'-deoxyribonucleoside 5'-diphosphate + ATP = a 2'-deoxyribonucleoside 5'-triphosphate + ADP. It catalyses the reaction a ribonucleoside 5'-diphosphate + ATP = a ribonucleoside 5'-triphosphate + ADP. Functionally, major role in the synthesis of nucleoside triphosphates other than ATP. The ATP gamma phosphate is transferred to the NDP beta phosphate via a ping-pong mechanism, using a phosphorylated active-site intermediate. The protein is Nucleoside diphosphate kinase of Methanocaldococcus jannaschii (strain ATCC 43067 / DSM 2661 / JAL-1 / JCM 10045 / NBRC 100440) (Methanococcus jannaschii).